The following is a 103-amino-acid chain: Alpha-ketoglutarate dehydrogenase component 4 (103 aa).

At Met1 the chain carries N-acetylmethionine. At Lys5 the chain carries N6-succinyllysine. The tract at residues 23–70 is disordered; the sequence is IRFPDRRDNPKPNVSEVLRSAGLPSHTSSISQHSKGSKSPDWLMHQGP. A compositionally biased stretch (low complexity) spans 47–61; it reads SHTSSISQHSKGSKS. 2 positions are modified to phosphoserine: Ser61 and Ser90.

Belongs to the alpha-ketoglutarate dehydrogenase component 4 family. In terms of assembly, component of the 2-oxoglutarate dehydrogenase complex (OGDHC), composed of OGDH (2-oxoglutarate dehydrogenase; also called E1 subunit), DLST (dihydrolipoamide succinyltransferase; also called E2 subunit) and DLD (dihydrolipoamide dehydrogenase; also called E3 subunit), and the assembly factor KGD4. Within OGDHC complex, interacts (via N-terminus) with E3 subunit and (via C-terminus) with E2 subunit.

It is found in the mitochondrion. In terms of biological role, molecular adapter that is necessary to form a stable 2-oxoglutarate dehydrogenase enzyme complex (OGDHC). Enables the specific recruitment of E3 subunit to E2 subunit in the 2-oxoglutarate dehydrogenase complex (OGDHC). The chain is Alpha-ketoglutarate dehydrogenase component 4 (KGD4) from Bos taurus (Bovine).